The sequence spans 567 residues: Dihydrolipoyl dehydrogenase 2, chloroplastic (567 aa).

The transit peptide at 1-67 (MQSVLSLSFS…HIQSRRIEVS (67 aa)) directs the protein to the chloroplast. FAD is bound by residues 114–122 (EGDVVGGTC), lysine 131, glycine 197, and 221–223 (TGS). Cysteine 122 and cysteine 127 are disulfide-bonded. NAD(+) is bound by residues 258–265 (GSGYIGLE), glutamate 281, and glycine 354. Residues aspartate 400 and 406-409 (MLAH) contribute to the FAD site. Histidine 536 functions as the Proton acceptor in the catalytic mechanism.

Belongs to the class-I pyridine nucleotide-disulfide oxidoreductase family. In terms of assembly, homodimer. Part of the plastidial pyruvate dehydrogenase complex (PDC) containing multiple copies of three enzymatic components: pyruvate dehydrogenase (E1), dihydrolipoamide acetyltransferase (E2) and lipoamide dehydrogenase (E3). Requires FAD as cofactor. In terms of tissue distribution, expressed mainly in flower buds and immature siliques, and to a lesser extent in flowers.

The protein localises to the plastid. It is found in the chloroplast stroma. The catalysed reaction is N(6)-[(R)-dihydrolipoyl]-L-lysyl-[protein] + NAD(+) = N(6)-[(R)-lipoyl]-L-lysyl-[protein] + NADH + H(+). Functionally, lipoamide dehydrogenase is a component of the plastidial pyruvate dehydrogenase complex (PDC). This is Dihydrolipoyl dehydrogenase 2, chloroplastic (LPD2) from Arabidopsis thaliana (Mouse-ear cress).